Reading from the N-terminus, the 472-residue chain is Eukaryotic translation initiation factor 2 subunit 3 (472 aa).

Ala2 bears the N-acetylalanine; partial mark. Residues 39-247 form the tr-type G domain; that stretch reads QATINIGTIG…YIVKKIPVPL (209 aa). Positions 48–55 are G1; that stretch reads GHVAHGKS. 51–56 is a binding site for GTP; the sequence is AHGKST. The G2 stretch occupies residues 76–80; sequence NITIK. A G3 region spans residues 134–137; sequence DCPG. GTP-binding positions include 190–193 and 225–227; these read NKID and SAQ. Positions 190–193 are G4; it reads NKID. The segment at 225–227 is G5; the sequence is SAQ. The segment at 457–469 is interacts with CDC123; that stretch reads GQIRRGVTIKPTV.

The protein belongs to the TRAFAC class translation factor GTPase superfamily. Classic translation factor GTPase family. EIF2G subfamily. As to quaternary structure, eukaryotic translation initiation factor 2 eIF2 is a heterotrimeric complex composed of an alpha (EIF2S1), a beta (EIF2S2) and a gamma (EIF2S3) chain. eIF2 is member of the 43S pre-initiation complex (43S PIC).

It localises to the cytoplasm. Its subcellular location is the cytosol. It catalyses the reaction GTP + H2O = GDP + phosphate + H(+). Functionally, member of the eIF2 complex that functions in the early steps of protein synthesis by forming a ternary complex with GTP and initiator tRNA. This complex binds to a 40S ribosomal subunit, followed by mRNA binding to form the 43S pre-initiation complex (43S PIC). Junction of the 60S ribosomal subunit to form the 80S initiation complex is preceded by hydrolysis of the GTP bound to eIF2 and release of an eIF2-GDP binary complex. In order for eIF2 to recycle and catalyze another round of initiation, the GDP bound to eIF2 must exchange with GTP by way of a reaction catalyzed by eIF-2B. The chain is Eukaryotic translation initiation factor 2 subunit 3 (EIF2S3) from Gallus gallus (Chicken).